Reading from the N-terminus, the 240-residue chain is Transcriptional activator protein VanR (240 aa).

The region spanning 169–234 is the HTH luxR-type domain; it reads DAKPRAVLTA…QAITKAILGG (66 aa). A DNA-binding region (H-T-H motif) is located at residues 193–212; that stretch reads AWEIATIINTSERTVKFHFS.

The protein belongs to the autoinducer-regulated transcriptional regulatory protein family.

In terms of biological role, probable transcriptional activator. Binds to autoinducer molecule ODHL. In Vibrio anguillarum (Listonella anguillarum), this protein is Transcriptional activator protein VanR (vanR).